The primary structure comprises 219 residues: Ribose-5-phosphate isomerase A (219 aa).

Substrate contacts are provided by residues T28 to T31, D81 to D84, and K94 to G97. E103 acts as the Proton acceptor in catalysis. Position 121 (K121) interacts with substrate.

The protein belongs to the ribose 5-phosphate isomerase family. In terms of assembly, homodimer.

It carries out the reaction aldehydo-D-ribose 5-phosphate = D-ribulose 5-phosphate. The protein operates within carbohydrate degradation; pentose phosphate pathway; D-ribose 5-phosphate from D-ribulose 5-phosphate (non-oxidative stage): step 1/1. Functionally, catalyzes the reversible conversion of ribose-5-phosphate to ribulose 5-phosphate. The sequence is that of Ribose-5-phosphate isomerase A from Shewanella sp. (strain ANA-3).